The sequence spans 366 residues: uncharacterized protein (366 aa).

Residues 63–288 (ARVAMVGFPS…LLEKMWEYLA (226 aa)) form the OBG-type G domain. GTP is bound by residues 69 to 76 (GFPSVGKS), 115 to 119 (DLPGI), and 246 to 249 (NKVD). Residues 288 to 365 (ALVRVYTKKP…DHEDVIQIVK (78 aa)) form the TGS domain.

It belongs to the TRAFAC class OBG-HflX-like GTPase superfamily. OBG GTPase family.

This is an uncharacterized protein from Caenorhabditis elegans.